Here is a 335-residue protein sequence, read N- to C-terminus: Holliday junction branch migration complex subunit RuvB (335 aa).

Positions 4–184 (ADRIISSNAQ…FGIVQRLEFY (181 aa)) are large ATPase domain (RuvB-L). ATP contacts are provided by residues Ile23, Arg24, Gly65, Lys68, Thr69, Thr70, 131–133 (EDY), Arg174, Tyr184, and Arg221. Thr69 contacts Mg(2+). A small ATPAse domain (RuvB-S) region spans residues 185–255 (SVEDLTSIVA…IAKSALSMLD (71 aa)). The segment at 258–335 (QAGFDYLDRK…RHFGLDKLTE (78 aa)) is head domain (RuvB-H). Positions 294, 313, and 318 each coordinate DNA.

Belongs to the RuvB family. Homohexamer. Forms an RuvA(8)-RuvB(12)-Holliday junction (HJ) complex. HJ DNA is sandwiched between 2 RuvA tetramers; dsDNA enters through RuvA and exits via RuvB. An RuvB hexamer assembles on each DNA strand where it exits the tetramer. Each RuvB hexamer is contacted by two RuvA subunits (via domain III) on 2 adjacent RuvB subunits; this complex drives branch migration. In the full resolvosome a probable DNA-RuvA(4)-RuvB(12)-RuvC(2) complex forms which resolves the HJ.

The protein localises to the cytoplasm. It carries out the reaction ATP + H2O = ADP + phosphate + H(+). Functionally, the RuvA-RuvB-RuvC complex processes Holliday junction (HJ) DNA during genetic recombination and DNA repair, while the RuvA-RuvB complex plays an important role in the rescue of blocked DNA replication forks via replication fork reversal (RFR). RuvA specifically binds to HJ cruciform DNA, conferring on it an open structure. The RuvB hexamer acts as an ATP-dependent pump, pulling dsDNA into and through the RuvAB complex. RuvB forms 2 homohexamers on either side of HJ DNA bound by 1 or 2 RuvA tetramers; 4 subunits per hexamer contact DNA at a time. Coordinated motions by a converter formed by DNA-disengaged RuvB subunits stimulates ATP hydrolysis and nucleotide exchange. Immobilization of the converter enables RuvB to convert the ATP-contained energy into a lever motion, pulling 2 nucleotides of DNA out of the RuvA tetramer per ATP hydrolyzed, thus driving DNA branch migration. The RuvB motors rotate together with the DNA substrate, which together with the progressing nucleotide cycle form the mechanistic basis for DNA recombination by continuous HJ branch migration. Branch migration allows RuvC to scan DNA until it finds its consensus sequence, where it cleaves and resolves cruciform DNA. The polypeptide is Holliday junction branch migration complex subunit RuvB (Mannheimia succiniciproducens (strain KCTC 0769BP / MBEL55E)).